Reading from the N-terminus, the 427-residue chain is Adenylosuccinate synthetase (427 aa).

GTP contacts are provided by residues 12–18 (GDEGKGK) and 40–42 (GHT). The active-site Proton acceptor is aspartate 13. Mg(2+)-binding residues include aspartate 13 and glycine 40. IMP is bound by residues 13 to 16 (DEGK), 38 to 41 (NAGH), threonine 126, arginine 140, glutamine 221, threonine 236, and arginine 299. The active-site Proton donor is the histidine 41. Residue 295 to 301 (STTKRPR) coordinates substrate. Residues arginine 301, 327-329 (KLD), and 409-411 (SVG) contribute to the GTP site.

It belongs to the adenylosuccinate synthetase family. In terms of assembly, homodimer. Requires Mg(2+) as cofactor.

It localises to the cytoplasm. It carries out the reaction IMP + L-aspartate + GTP = N(6)-(1,2-dicarboxyethyl)-AMP + GDP + phosphate + 2 H(+). It functions in the pathway purine metabolism; AMP biosynthesis via de novo pathway; AMP from IMP: step 1/2. Plays an important role in the de novo pathway of purine nucleotide biosynthesis. Catalyzes the first committed step in the biosynthesis of AMP from IMP. The sequence is that of Adenylosuccinate synthetase from Borrelia recurrentis (strain A1).